The chain runs to 194 residues: Putative 3-methyladenine DNA glycosylase (194 aa).

The protein belongs to the DNA glycosylase MPG family.

This is Putative 3-methyladenine DNA glycosylase from Anaeromyxobacter sp. (strain Fw109-5).